The following is a 270-amino-acid chain: Putative hydro-lyase H16_B1759 (270 aa).

The protein belongs to the D-glutamate cyclase family.

The sequence is that of Putative hydro-lyase H16_B1759 from Cupriavidus necator (strain ATCC 17699 / DSM 428 / KCTC 22496 / NCIMB 10442 / H16 / Stanier 337) (Ralstonia eutropha).